Reading from the N-terminus, the 132-residue chain is Protein NrdI (132 aa).

This sequence belongs to the NrdI family.

Its function is as follows. Probably involved in ribonucleotide reductase function. The protein is Protein NrdI of Agrobacterium fabrum (strain C58 / ATCC 33970) (Agrobacterium tumefaciens (strain C58)).